Reading from the N-terminus, the 361-residue chain is NAD(P)H-quinone oxidoreductase subunit 1, chloroplastic (361 aa).

7 helical membrane passes run 28 to 48, 99 to 119, 128 to 148, 249 to 269, 270 to 290, 301 to 321, and 341 to 361; these read IWVL…VLVI, FTIG…VIPF, LSIG…GLLM, YSGI…LVSS, LFVT…LFVP, TIIC…ISIA, and FLLP…LLSL.

The protein belongs to the complex I subunit 1 family. As to quaternary structure, NDH is composed of at least 16 different subunits, 5 of which are encoded in the nucleus.

It localises to the plastid. Its subcellular location is the chloroplast thylakoid membrane. The enzyme catalyses a plastoquinone + NADH + (n+1) H(+)(in) = a plastoquinol + NAD(+) + n H(+)(out). It catalyses the reaction a plastoquinone + NADPH + (n+1) H(+)(in) = a plastoquinol + NADP(+) + n H(+)(out). NDH shuttles electrons from NAD(P)H:plastoquinone, via FMN and iron-sulfur (Fe-S) centers, to quinones in the photosynthetic chain and possibly in a chloroplast respiratory chain. The immediate electron acceptor for the enzyme in this species is believed to be plastoquinone. Couples the redox reaction to proton translocation, and thus conserves the redox energy in a proton gradient. The chain is NAD(P)H-quinone oxidoreductase subunit 1, chloroplastic from Jasminum nudiflorum (Winter jasmine).